The sequence spans 95 residues: Small ribosomal subunit protein bS18 (95 aa).

This sequence belongs to the bacterial ribosomal protein bS18 family. In terms of assembly, part of the 30S ribosomal subunit. Forms a tight heterodimer with protein bS6.

Its function is as follows. Binds as a heterodimer with protein bS6 to the central domain of the 16S rRNA, where it helps stabilize the platform of the 30S subunit. In Ehrlichia ruminantium (strain Gardel), this protein is Small ribosomal subunit protein bS18.